A 344-amino-acid chain; its full sequence is Hyoscyamine 6-dioxygenase (344 aa).

The Fe2OG dioxygenase domain occupies 193–293; it reads QIQMMLTNYY…RVSIATLIGP (101 aa). 3 residues coordinate Fe cation: H217, D219, and H274. 2-oxoglutarate is bound at residue R284.

This sequence belongs to the iron/ascorbate-dependent oxidoreductase family. Monomer. Fe(2+) serves as cofactor. Requires L-ascorbate as cofactor. In terms of processing, the N-terminus is blocked. As to expression, root.

The enzyme catalyses L-hyoscyamine + 2-oxoglutarate + O2 = (6S)-6-hydroxyhyoscyamine + succinate + CO2. The protein operates within alkaloid biosynthesis; scopolamine biosynthesis. In Hyoscyamus niger (Black henbane), this protein is Hyoscyamine 6-dioxygenase (H6H).